Here is a 213-residue protein sequence, read N- to C-terminus: Protein Syd (213 aa).

It belongs to the Syd family.

Its subcellular location is the cell inner membrane. Functionally, interacts with the SecY protein in vivo. May bind preferentially to an uncomplexed state of SecY, thus functioning either as a chelating agent for excess SecY in the cell or as a regulatory factor that negatively controls the translocase function. The protein is Protein Syd of Shewanella halifaxensis (strain HAW-EB4).